Reading from the N-terminus, the 602-residue chain is Threonine--tRNA ligase (602 aa).

The segment at 208–499 is catalytic; the sequence is DHRKLGTELK…LTEHCAGEFP (292 aa). Zn(2+) contacts are provided by C300, H351, and H476.

It belongs to the class-II aminoacyl-tRNA synthetase family. Homodimer. Zn(2+) serves as cofactor.

It localises to the cytoplasm. It carries out the reaction tRNA(Thr) + L-threonine + ATP = L-threonyl-tRNA(Thr) + AMP + diphosphate + H(+). Its function is as follows. Catalyzes the attachment of threonine to tRNA(Thr) in a two-step reaction: L-threonine is first activated by ATP to form Thr-AMP and then transferred to the acceptor end of tRNA(Thr). Also edits incorrectly charged L-seryl-tRNA(Thr). This chain is Threonine--tRNA ligase, found in Campylobacter jejuni (strain RM1221).